The chain runs to 498 residues: Probable malate:quinone oxidoreductase 2 (498 aa).

The protein belongs to the MQO family. Requires FAD as cofactor.

The catalysed reaction is (S)-malate + a quinone = a quinol + oxaloacetate. Its pathway is carbohydrate metabolism; tricarboxylic acid cycle; oxaloacetate from (S)-malate (quinone route): step 1/1. This chain is Probable malate:quinone oxidoreductase 2, found in Staphylococcus aureus (strain COL).